The chain runs to 504 residues: MWIFYFPAVISVLIVTLYFYFTRTFNYWKKRNVRGPEPVVFFGNLKDSALRKKNMGVVMEELYNMFPEEKVIGIYRMTSPCLLVRDLEVIKHIMIKDFEVFSDRGLEFSKEGLGQNLFHADGDTWRTLRNRFTPIFTSGKLKNMFYLMNEGADNFIDHVSKECEKHQEFEIHTLLQTYTMSTISSCAFGVSYDTISDKLDTLAIVDKIISEPSYAIELDMMYPGLLPKLNLSIFPSVVHKFFKNLVNTIVTQRNGKPSGRNDFMDLILELRQMGEITSNKYGNNMSTLEITESVMCAQAFVFYIAGYETSATTMAYLTYQLALNPDIQNKLIAEIDEAIKANGGKVTYDTVKDMKYLNKVFDETLRMYSIVEPLQRKAIRDYKLPGTDVVIEKDTVVLISPRGIHYDPKYYDNPKQFNPERFFAEEVGKRHPCAYLPFGLGQRNCIGMRFGRLQSLLCITKLLSKFRLEPSKNTDRNLQVEPYRFIIGPKGGIRLNIVPRKDVS.

Cysteine 445 contacts heme.

The protein belongs to the cytochrome P450 family. It depends on heme as a cofactor.

It localises to the endoplasmic reticulum membrane. It is found in the microsome membrane. It catalyses the reaction an organic molecule + reduced [NADPH--hemoprotein reductase] + O2 = an alcohol + oxidized [NADPH--hemoprotein reductase] + H2O + H(+). This chain is Cytochrome P450 6B2 (CYP6B2), found in Helicoverpa armigera (Cotton bollworm).